The primary structure comprises 461 residues: MTISVFDLFTIGIGPSSSHTVGPMRAANQFVVALRRRGHLDDLEAMRVDLFGSLAATGAGHGTMSAILLGLEGCQPETITTEHKERRLAEIAASGVTRIGGVIPVPLTERDIDLHPDIVLPTHPNGMTFTAAGPHGRVLATETYFSVGGGFIVTEQTSGNSGQHPCSVALPYVSAQELLDICDRLDVSISEAALRNETCCRTENEVRAALLHLRDVMVECEQRSIAREGLLPGGLRVRRRAKVWYDRLNAEDPTRKPEFAEDWVNLVALAVNEENASGGRVVTAPTNGAAGIVPAVLHYAIHYTSAGAGDPDDVTVRFLLTAGAIGSLFKERASISGAEVGCQGEVGSAAAMAAAGLAEILGGTPRQVENAAEIAMEHSLGLTCDPIAGLVQIPCIERNAISAGKAINAARMALRGDGIHRVTLDQVIDTMRATGADMHTKYKETSAGGLAINVAVNIVEC.

It belongs to the iron-sulfur dependent L-serine dehydratase family. [4Fe-4S] cluster is required as a cofactor.

It catalyses the reaction L-serine = pyruvate + NH4(+). Its pathway is carbohydrate biosynthesis; gluconeogenesis. The polypeptide is L-serine dehydratase (sdaA) (Mycobacterium bovis (strain ATCC BAA-935 / AF2122/97)).